The following is a 478-amino-acid chain: Cytochrome c-552 (478 aa).

An N-terminal signal peptide occupies residues 1–26; the sequence is MARKTLRARRFFSLIFPFFFITSVYA. Histidine 94 contributes to the heme c binding site. Positions 122, 125, and 126 each coordinate heme. 6 residues coordinate heme c: cysteine 160, cysteine 163, histidine 164, cysteine 209, cysteine 212, and histidine 213. Glutamate 215, tyrosine 216, lysine 261, and glutamine 263 together coordinate Ca(2+). Tyrosine 216 contacts substrate. Residue histidine 264 participates in substrate binding. 9 residues coordinate heme c: histidine 275, cysteine 282, cysteine 285, histidine 286, histidine 301, cysteine 314, cysteine 317, histidine 318, and histidine 393.

It belongs to the cytochrome c-552 family. Ca(2+) serves as cofactor. The cofactor is heme c.

The protein localises to the periplasm. It carries out the reaction 6 Fe(III)-[cytochrome c] + NH4(+) + 2 H2O = 6 Fe(II)-[cytochrome c] + nitrite + 8 H(+). Its pathway is nitrogen metabolism; nitrate reduction (assimilation). Functionally, catalyzes the reduction of nitrite to ammonia, consuming six electrons in the process. This chain is Cytochrome c-552, found in Salmonella dublin (strain CT_02021853).